The following is a 231-amino-acid chain: Large ribosomal subunit protein uL1 (231 aa).

It belongs to the universal ribosomal protein uL1 family. Part of the 50S ribosomal subunit.

Binds directly to 23S rRNA. The L1 stalk is quite mobile in the ribosome, and is involved in E site tRNA release. In terms of biological role, protein L1 is also a translational repressor protein, it controls the translation of the L11 operon by binding to its mRNA. The polypeptide is Large ribosomal subunit protein uL1 (Caldanaerobacter subterraneus subsp. tengcongensis (strain DSM 15242 / JCM 11007 / NBRC 100824 / MB4) (Thermoanaerobacter tengcongensis)).